Here is a 632-residue protein sequence, read N- to C-terminus: MIRITFLAKQKVEEYSSRVTGFDILQPDISKEAIALRVNGELYDLSREIESDTEIDVIQLNDEEGLDIIRHDAAHIMAQAVKELFPNAQVTIGPTIQDGFYYDFAIDHTFTTDDLAAIEKKMKEIIKSNHRFIREVWARKQAINFFSSIGEKYKVDIISSIPESEDLTVYRQGDFVDLCRGPHSPSTSRVKAFKLMKVAGAYWRGNVKGPMLQRIYGTAWRNKDELNIYLKRLEEAKKRDHRRIAKDMDLFHIQEEAVGQVFWHEQGYTLYNVLESYIRKKLINNGYAEVKTPILVSKELWEKSGHWDKFRENMFIVDESESKKLAIKPMNCPCHVQIFNSYTRSYRNLPIRMAEFGMCHRNESSGSLHGLMRVRGFTQDDAHIFCMEEQVNSETVKFCALLKEVYSELGFNEISVKFSDRPNVRAGDNEVWDRAEKALLEAVKEAGLSYELNPGEGAFYGPKLEFILKDAIGRSWQCGTLQVDFILPERLGAFYIGADGQKYHPVMLHRAILGTFERFIGILIEHYAGKFPLWLAPTQLVILTVTNEADNYATEISNVLKEQGVRVKTDLTNEKVSYKIRLHSSNKVPILWIVGKNEVASKTVSVRNLGSEKQESSSCEKAVKLLLKKVLI.

A TGS domain is found at 1-59 (MIRITFLAKQKVEEYSSRVTGFDILQPDISKEAIALRVNGELYDLSREIESDTEIDVIQ). Residues 240-532 (DHRRIAKDMD…LIEHYAGKFP (293 aa)) are catalytic. 3 residues coordinate Zn(2+): cysteine 332, histidine 383, and histidine 509.

Belongs to the class-II aminoacyl-tRNA synthetase family. In terms of assembly, homodimer. Zn(2+) is required as a cofactor.

The protein localises to the cytoplasm. The catalysed reaction is tRNA(Thr) + L-threonine + ATP = L-threonyl-tRNA(Thr) + AMP + diphosphate + H(+). In terms of biological role, catalyzes the attachment of threonine to tRNA(Thr) in a two-step reaction: L-threonine is first activated by ATP to form Thr-AMP and then transferred to the acceptor end of tRNA(Thr). Also edits incorrectly charged L-seryl-tRNA(Thr). In Wolbachia sp. subsp. Brugia malayi (strain TRS), this protein is Threonine--tRNA ligase.